A 429-amino-acid chain; its full sequence is Glutamate-1-semialdehyde 2,1-aminomutase 2 (429 aa).

Residue Lys268 is modified to N6-(pyridoxal phosphate)lysine.

It belongs to the class-III pyridoxal-phosphate-dependent aminotransferase family. HemL subfamily. Homodimer. The cofactor is pyridoxal 5'-phosphate.

Its subcellular location is the cytoplasm. The catalysed reaction is (S)-4-amino-5-oxopentanoate = 5-aminolevulinate. The protein operates within porphyrin-containing compound metabolism; protoporphyrin-IX biosynthesis; 5-aminolevulinate from L-glutamyl-tRNA(Glu): step 2/2. The chain is Glutamate-1-semialdehyde 2,1-aminomutase 2 from Staphylococcus aureus (strain bovine RF122 / ET3-1).